Here is a 543-residue protein sequence, read N- to C-terminus: Chaperonin GroEL (543 aa).

Residues 29–32 (TLGP), 86–90 (DGTTT), G413, 476–478 (NAA), and D492 contribute to the ATP site.

Belongs to the chaperonin (HSP60) family. Forms a cylinder of 14 subunits composed of two heptameric rings stacked back-to-back. Interacts with the co-chaperonin GroES.

Its subcellular location is the cytoplasm. The enzyme catalyses ATP + H2O + a folded polypeptide = ADP + phosphate + an unfolded polypeptide.. Its function is as follows. Together with its co-chaperonin GroES, plays an essential role in assisting protein folding. The GroEL-GroES system forms a nano-cage that allows encapsulation of the non-native substrate proteins and provides a physical environment optimized to promote and accelerate protein folding. This chain is Chaperonin GroEL, found in Streptococcus pyogenes serotype M3 (strain SSI-1).